The primary structure comprises 57 residues: Mambaquaretin-5 (57 aa).

A BPTI/Kunitz inhibitor domain is found at 5 to 55; that stretch reads CNLPVKPGPCSGFFSAFYYSQKTNKCHSFTYSGCRGNGNRFRTIEECRRTC. Intrachain disulfides connect Cys5–Cys55, Cys14–Cys38, and Cys30–Cys51.

It belongs to the venom Kunitz-type family. As to expression, expressed by the venom gland.

It is found in the secreted. In terms of biological role, interacts with vasopressin V2 receptor (V2R/AVPR2), probably in a selective manner. Inhibits vasopressin binding human V2R in the nanomolar range (Ki=3.50 nM), and also potently inhibits vasopressin-induced cAMP production (IC(50)=21 nM). In vivo, intraperitoneal injection of this protein into rats increases diuresis by 6-fold, without any loss of electrolytes. In Dendroaspis jamesoni kaimosae (Eastern Jameson's mamba), this protein is Mambaquaretin-5.